The primary structure comprises 336 residues: MIEADRLVSADSSGAEEAVDRAIRPKLLAEYVGQPQVRSQMEIFIQAAKLRGDALDHLLIFGPPGLGKTTLANIVANEMGVNLRTTSGPVLEKAGDLAAMLTNLEPHDVLFIDEIHRLSPVVEEVLYPAMEDYQLDIMIGEGPAARSIKIDLPPFTLIGATTRAGSLTSPLRDRFGIVQRLEFYQIPDLQHIVSRSARHMGLEMSDEGALEVARRSRGTPRIANRLLRRVRDFAEVRHDGSISADIAAQALDMLNVDAEGFDYMDRKLLLAVIDKFFGGPVGLDNLAAAIGEERETIEDVLEPYLIQQGFLQRTPRGRMATVRAWNHFGITPPEMP.

A large ATPase domain (RuvB-L) region spans residues 4-184; the sequence is ADRLVSADSS…FGIVQRLEFY (181 aa). ATP-binding positions include isoleucine 23, arginine 24, glycine 65, lysine 68, threonine 69, threonine 70, 131 to 133, arginine 174, tyrosine 184, and arginine 221; that span reads EDY. Threonine 69 contributes to the Mg(2+) binding site. Residues 185-255 form a small ATPAse domain (RuvB-S) region; sequence QIPDLQHIVS…IAAQALDMLN (71 aa). The interval 258-336 is head domain (RuvB-H); sequence AEGFDYMDRK…HFGITPPEMP (79 aa). The DNA site is built by arginine 294, arginine 313, and arginine 318.

The protein belongs to the RuvB family. In terms of assembly, homohexamer. Forms an RuvA(8)-RuvB(12)-Holliday junction (HJ) complex. HJ DNA is sandwiched between 2 RuvA tetramers; dsDNA enters through RuvA and exits via RuvB. An RuvB hexamer assembles on each DNA strand where it exits the tetramer. Each RuvB hexamer is contacted by two RuvA subunits (via domain III) on 2 adjacent RuvB subunits; this complex drives branch migration. In the full resolvosome a probable DNA-RuvA(4)-RuvB(12)-RuvC(2) complex forms which resolves the HJ.

The protein resides in the cytoplasm. It catalyses the reaction ATP + H2O = ADP + phosphate + H(+). Its function is as follows. The RuvA-RuvB-RuvC complex processes Holliday junction (HJ) DNA during genetic recombination and DNA repair, while the RuvA-RuvB complex plays an important role in the rescue of blocked DNA replication forks via replication fork reversal (RFR). RuvA specifically binds to HJ cruciform DNA, conferring on it an open structure. The RuvB hexamer acts as an ATP-dependent pump, pulling dsDNA into and through the RuvAB complex. RuvB forms 2 homohexamers on either side of HJ DNA bound by 1 or 2 RuvA tetramers; 4 subunits per hexamer contact DNA at a time. Coordinated motions by a converter formed by DNA-disengaged RuvB subunits stimulates ATP hydrolysis and nucleotide exchange. Immobilization of the converter enables RuvB to convert the ATP-contained energy into a lever motion, pulling 2 nucleotides of DNA out of the RuvA tetramer per ATP hydrolyzed, thus driving DNA branch migration. The RuvB motors rotate together with the DNA substrate, which together with the progressing nucleotide cycle form the mechanistic basis for DNA recombination by continuous HJ branch migration. Branch migration allows RuvC to scan DNA until it finds its consensus sequence, where it cleaves and resolves cruciform DNA. The polypeptide is Holliday junction branch migration complex subunit RuvB (Klebsiella pneumoniae (strain 342)).